Consider the following 164-residue polypeptide: UPF0304 protein ESA_00925 (164 aa).

The protein belongs to the UPF0304 family.

The polypeptide is UPF0304 protein ESA_00925 (Cronobacter sakazakii (strain ATCC BAA-894) (Enterobacter sakazakii)).